We begin with the raw amino-acid sequence, 362 residues long: Phosphoserine aminotransferase (362 aa).

Arg-43 lines the L-glutamate pocket. Pyridoxal 5'-phosphate-binding positions include 77-78 (AT), Trp-103, Thr-153, Asp-173, and Gln-196. The residue at position 197 (Lys-197) is an N6-(pyridoxal phosphate)lysine. 238-239 (NT) is a binding site for pyridoxal 5'-phosphate.

Belongs to the class-V pyridoxal-phosphate-dependent aminotransferase family. SerC subfamily. Homodimer. Requires pyridoxal 5'-phosphate as cofactor.

It localises to the cytoplasm. It catalyses the reaction O-phospho-L-serine + 2-oxoglutarate = 3-phosphooxypyruvate + L-glutamate. The catalysed reaction is 4-(phosphooxy)-L-threonine + 2-oxoglutarate = (R)-3-hydroxy-2-oxo-4-phosphooxybutanoate + L-glutamate. The protein operates within amino-acid biosynthesis; L-serine biosynthesis; L-serine from 3-phospho-D-glycerate: step 2/3. It participates in cofactor biosynthesis; pyridoxine 5'-phosphate biosynthesis; pyridoxine 5'-phosphate from D-erythrose 4-phosphate: step 3/5. In terms of biological role, catalyzes the reversible conversion of 3-phosphohydroxypyruvate to phosphoserine and of 3-hydroxy-2-oxo-4-phosphonooxybutanoate to phosphohydroxythreonine. The chain is Phosphoserine aminotransferase from Xylella fastidiosa (strain Temecula1 / ATCC 700964).